We begin with the raw amino-acid sequence, 236 residues long: 2-C-methyl-D-erythritol 4-phosphate cytidylyltransferase (236 aa).

The protein belongs to the IspD/TarI cytidylyltransferase family. IspD subfamily. As to quaternary structure, homodimer.

It carries out the reaction 2-C-methyl-D-erythritol 4-phosphate + CTP + H(+) = 4-CDP-2-C-methyl-D-erythritol + diphosphate. Its pathway is isoprenoid biosynthesis; isopentenyl diphosphate biosynthesis via DXP pathway; isopentenyl diphosphate from 1-deoxy-D-xylulose 5-phosphate: step 2/6. In terms of biological role, catalyzes the formation of 4-diphosphocytidyl-2-C-methyl-D-erythritol from CTP and 2-C-methyl-D-erythritol 4-phosphate (MEP). This is 2-C-methyl-D-erythritol 4-phosphate cytidylyltransferase from Salmonella agona (strain SL483).